Consider the following 371-residue polypeptide: Solute carrier family 35 member F6 (371 aa).

Residues 1–25 form the signal peptide; sequence MAWTKHQLFLAGLMLVTGSINTLSA. 2 helical membrane-spanning segments follow: residues 48–68 and 89–109; these read FLQAVGMFLGEFSCLAAFYLL and LLFLPPALCDMTGTSLMYVAL. One can recognise an EamA domain in the interval 104 to 160; it reads LMYVALNMTSASSFQMLRGAVIIFTGLFSVAFLGRRLVLSQWLGILATIAGLVVVGL. N-linked (GlcNAc...) asparagine glycosylation is present at N110. 7 consecutive transmembrane segments (helical) span residues 117-137, 140-160, 176-196, 216-236, 261-281, 295-312, and 317-336; these read FQMLRGAVIIFTGLFSVAFLG, LVLSQWLGILATIAGLVVVGL, VITGDLLIIMAQIIVAIQMVL, GLFGFVILSLLLVPMYYIPAG, LIAVALLGNISSIAFFNFAGI, LDSLRTVVIWALSLALGW, and ALQILGFLILLIGTALYNGL. The tract at residues 347–371 is disordered; the sequence is GRPPAEESEQERLLGGSRTPINDAS. At T365 the chain carries Phosphothreonine.

The protein belongs to the SLC35F solute transporter family. Interacts with SLC25A5.

It is found in the mitochondrion. It localises to the lysosome membrane. Involved in the maintenance of mitochondrial membrane potential in pancreatic ductal adenocarcinoma (PDAC) cells. Promotes pancreatic ductal adenocarcinoma (PDAC) cell growth. May play a role as a nucleotide-sugar transporter. In Pongo abelii (Sumatran orangutan), this protein is Solute carrier family 35 member F6 (SLC35F6).